The sequence spans 835 residues: Ribonucleoside-diphosphate reductase large subunit (835 aa).

Substrate contacts are provided by residues Ser222, 237–238 (SC), Gly266, 447–451 (NLCCE), and 660–664 (PSASS). Cys238 and Cys464 are oxidised to a cystine. Asn447 functions as the Proton acceptor in the catalytic mechanism. Catalysis depends on Cys449, which acts as the Cysteine radical intermediate. Residue Glu451 is the Proton acceptor of the active site.

This sequence belongs to the ribonucleoside diphosphate reductase large chain family. As to quaternary structure, heterotetramer composed of a homodimer of the large subunit (R1) and a homodimer of the small subunit (R2). Larger multisubunit protein complex are also active, composed of (R1)n(R2)n.

It carries out the reaction a 2'-deoxyribonucleoside 5'-diphosphate + [thioredoxin]-disulfide + H2O = a ribonucleoside 5'-diphosphate + [thioredoxin]-dithiol. Ribonucleoside-diphosphate reductase holoenzyme provides the precursors necessary for viral DNA synthesis. Allows virus growth in non-dividing cells. Catalyzes the biosynthesis of deoxyribonucleotides from the corresponding ribonucleotides. The protein is Ribonucleoside-diphosphate reductase large subunit of Magallana gigas (Pacific oyster).